The primary structure comprises 242 residues: TGACG-sequence-specific DNA-binding protein TGA-1B (242 aa).

Residues 1–125 (EFCDFSGNQA…HSSPNFENNS (125 aa)) are disordered. Residues 18–45 (DTSSPELRQSSSGSDVLNATSSTSSHQV) show a composition bias toward polar residues. Positions 66-79 (EGSRESANDNKGLG) are enriched in basic and acidic residues. Residues 88–125 (SPESQGSGNYGSNVSEGLNYPSDSNKSVHSSPNFENNS) show a composition bias toward polar residues. The region spanning 183 to 242 (DEKKRARLVRNRESAQLSRQRKKHYVEELEDKVRIMHSTIQDLNAKVAYIIAENATLKTQ) is the bZIP domain. Residues 185–216 (KKRARLVRNRESAQLSRQRKKHYVEELEDKVR) form a basic motif region. Positions 225 to 239 (LNAKVAYIIAENATL) are leucine-zipper.

This sequence belongs to the bZIP family.

It is found in the nucleus. Functionally, binds specifically to the DNA sequence 5'-TGACG-3'. The chain is TGACG-sequence-specific DNA-binding protein TGA-1B (TGA1B) from Nicotiana tabacum (Common tobacco).